The following is a 225-amino-acid chain: Probable 3-keto-L-gulonate-6-phosphate decarboxylase (225 aa).

Position 11 (aspartate 11) interacts with substrate. Positions 33 and 62 each coordinate Mg(2+). Arginine 202 lines the substrate pocket.

The protein belongs to the HPS/KGPDC family. KGPDC subfamily. In terms of assembly, homodimer. Mg(2+) serves as cofactor.

It carries out the reaction 3-dehydro-L-gulonate 6-phosphate + H(+) = L-xylulose 5-phosphate + CO2. In terms of biological role, catalyzes the decarboxylation of 3-keto-L-gulonate-6-P into L-xylulose-5-P. The chain is Probable 3-keto-L-gulonate-6-phosphate decarboxylase (sgbH) from Haemophilus influenzae (strain ATCC 51907 / DSM 11121 / KW20 / Rd).